The sequence spans 177 residues: Dual-action ribosomal maturation protein DarP (177 aa).

Basic and acidic residues predominate over residues 1-12 (MKIVGDSEHFKQ). Residues 1-26 (MKIVGDSEHFKQPYDSNDEYVSKTED) form a disordered region.

The protein belongs to the DarP family.

Its subcellular location is the cytoplasm. In terms of biological role, member of a network of 50S ribosomal subunit biogenesis factors which assembles along the 30S-50S interface, preventing incorrect 23S rRNA structures from forming. Promotes peptidyl transferase center (PTC) maturation. The protein is Dual-action ribosomal maturation protein DarP of Shewanella oneidensis (strain ATCC 700550 / JCM 31522 / CIP 106686 / LMG 19005 / NCIMB 14063 / MR-1).